The primary structure comprises 325 residues: ATP phosphoribosyltransferase (325 aa).

Belongs to the ATP phosphoribosyltransferase family. Long subfamily. Mg(2+) serves as cofactor.

The protein localises to the cytoplasm. It catalyses the reaction 1-(5-phospho-beta-D-ribosyl)-ATP + diphosphate = 5-phospho-alpha-D-ribose 1-diphosphate + ATP. It participates in amino-acid biosynthesis; L-histidine biosynthesis; L-histidine from 5-phospho-alpha-D-ribose 1-diphosphate: step 1/9. With respect to regulation, feedback inhibited by histidine. In terms of biological role, catalyzes the condensation of ATP and 5-phosphoribose 1-diphosphate to form N'-(5'-phosphoribosyl)-ATP (PR-ATP). Has a crucial role in the pathway because the rate of histidine biosynthesis seems to be controlled primarily by regulation of HisG enzymatic activity. This Nitrobacter winogradskyi (strain ATCC 25391 / DSM 10237 / CIP 104748 / NCIMB 11846 / Nb-255) protein is ATP phosphoribosyltransferase.